Reading from the N-terminus, the 286-residue chain is Putative WUSCHEL-related homeobox 2 (286 aa).

Positions 1–25 (MAPAVQQQQSGGGGGSTGAAAVGST) are disordered. The homeobox; WUS-type DNA-binding region spans 23–87 (GSTTRWCPTP…NHKARDRQKL (65 aa)).

This sequence belongs to the WUS homeobox family.

The protein resides in the nucleus. In terms of biological role, transcription factor which may be involved in developmental processes. The chain is Putative WUSCHEL-related homeobox 2 (WOX2) from Oryza sativa subsp. japonica (Rice).